The following is a 96-amino-acid chain: Large ribosomal subunit protein eL43 (96 aa).

The segment at 41-62 (CPVCGFMKLKRISTSIWECKKC) adopts a C4-type zinc-finger fold.

It belongs to the eukaryotic ribosomal protein eL43 family. It depends on Zn(2+) as a cofactor.

This is Large ribosomal subunit protein eL43 from Methanococcus aeolicus (strain ATCC BAA-1280 / DSM 17508 / OCM 812 / Nankai-3).